Reading from the N-terminus, the 155-residue chain is 6,7-dimethyl-8-ribityllumazine synthase (155 aa).

5-amino-6-(D-ribitylamino)uracil-binding positions include Phe-23, 57–59, and 81–83; these read AFE and AVI. 86–87 contributes to the (2S)-2-hydroxy-3-oxobutyl phosphate binding site; it reads ST. His-89 (proton donor) is an active-site residue. Phe-114 is a 5-amino-6-(D-ribitylamino)uracil binding site. Arg-128 contacts (2S)-2-hydroxy-3-oxobutyl phosphate.

Belongs to the DMRL synthase family.

The catalysed reaction is (2S)-2-hydroxy-3-oxobutyl phosphate + 5-amino-6-(D-ribitylamino)uracil = 6,7-dimethyl-8-(1-D-ribityl)lumazine + phosphate + 2 H2O + H(+). It functions in the pathway cofactor biosynthesis; riboflavin biosynthesis; riboflavin from 2-hydroxy-3-oxobutyl phosphate and 5-amino-6-(D-ribitylamino)uracil: step 1/2. Its function is as follows. Catalyzes the formation of 6,7-dimethyl-8-ribityllumazine by condensation of 5-amino-6-(D-ribitylamino)uracil with 3,4-dihydroxy-2-butanone 4-phosphate. This is the penultimate step in the biosynthesis of riboflavin. This is 6,7-dimethyl-8-ribityllumazine synthase from Trichlorobacter lovleyi (strain ATCC BAA-1151 / DSM 17278 / SZ) (Geobacter lovleyi).